Here is a 260-residue protein sequence, read N- to C-terminus: Transforming acid coiled-coil-containing protein 1 (260 aa).

Residues 1–43 are disordered; that stretch reads MSLNTTFTKEDGTEVVIPFNGSQNGHPENEEPEVEEAAEPSSS. The stretch at 108–249 forms a coiled coil; that stretch reads ASSEELEKAL…CDQLLNDVDV (142 aa).

Belongs to the TACC family. As to quaternary structure, interacts with zyg-9 to form a heterodimer. Interacts with zyg-8 to form a heterodimer. Interacts with efa-6 (via N-terminus). In terms of tissue distribution, expressed in touch neurons.

It is found in the cytoplasm. It localises to the cytoskeleton. The protein resides in the spindle pole. The protein localises to the microtubule organizing center. Its subcellular location is the centrosome. It is found in the chromosome. It localises to the centromere. The protein resides in the kinetochore. The protein localises to the cell projection. Its subcellular location is the axon. It is found in the perikaryon. Functionally, involved in microtubule formation, polymerization and assembly, regulating microtubule nucleation and length. Plays a role in pronuclear migration and mitotic and meiotic spindle elongation during early embryogenesis. In complex with zyg-9, functions during the early stages of embryonic development to regulate microtubule assembly throughout the cell cycle. Specifically, the complex is required for the formation and growth of astral microtubules and spindle microtubules during mitotic spindle assembly. At anaphase, the complex is required for mitotic spindle positioning in one-cell stage embryos. The complex acts in a partially redundant manner with the tac-1/zyg-8 complex to regulate microtubule assembly and processes during interphase, mitosis and meiosis in embryos. Plays a role in injury-induced axonal regrowth, regeneration and microtubule stability in PLM neurons and this may be downstream of efa-6. This chain is Transforming acid coiled-coil-containing protein 1, found in Caenorhabditis elegans.